The following is a 399-amino-acid chain: Phosphoglycerate kinase (399 aa).

Substrate contacts are provided by residues 22–24, Arg-37, 60–63, Arg-119, and Arg-152; these read DLN and HFGR. ATP-binding positions include Lys-202, Glu-324, and 354–357; that span reads GGDT.

The protein belongs to the phosphoglycerate kinase family. In terms of assembly, monomer.

Its subcellular location is the cytoplasm. The catalysed reaction is (2R)-3-phosphoglycerate + ATP = (2R)-3-phospho-glyceroyl phosphate + ADP. It participates in carbohydrate degradation; glycolysis; pyruvate from D-glyceraldehyde 3-phosphate: step 2/5. This Sinorhizobium fredii (strain NBRC 101917 / NGR234) protein is Phosphoglycerate kinase.